We begin with the raw amino-acid sequence, 64 residues long: Large ribosomal subunit protein bL33 (64 aa).

This sequence belongs to the bacterial ribosomal protein bL33 family.

The polypeptide is Large ribosomal subunit protein bL33 (Synechococcus sp. (strain JA-2-3B'a(2-13)) (Cyanobacteria bacterium Yellowstone B-Prime)).